The primary structure comprises 132 residues: Small ribosomal subunit protein uS8 (132 aa).

The protein belongs to the universal ribosomal protein uS8 family. In terms of assembly, part of the 30S ribosomal subunit. Contacts proteins S5 and S12.

Functionally, one of the primary rRNA binding proteins, it binds directly to 16S rRNA central domain where it helps coordinate assembly of the platform of the 30S subunit. This chain is Small ribosomal subunit protein uS8, found in Rhizobium etli (strain CIAT 652).